The chain runs to 755 residues: Polyribonucleotide nucleotidyltransferase (755 aa).

Mg(2+)-binding residues include aspartate 493 and aspartate 499. The KH domain occupies 560–619 (PRIMTIQIPVDKIGALIGPGGKTIRNICDTTGAQIDIEDDGRVFITAPDGEAAKKAISMI). One can recognise an S1 motif domain in the interval 629–698 (GDIFLGKVVS…NTGKISLSRR (70 aa)). The interval 704 to 755 (ETPEARKAAGAAPRPRPREEQRGGREEPRSLREELRGPRRDGERPRPRRRDD) is disordered. The segment covering 719–755 (RPREEQRGGREEPRSLREELRGPRRDGERPRPRRRDD) has biased composition (basic and acidic residues).

Belongs to the polyribonucleotide nucleotidyltransferase family. It depends on Mg(2+) as a cofactor.

Its subcellular location is the cytoplasm. It catalyses the reaction RNA(n+1) + phosphate = RNA(n) + a ribonucleoside 5'-diphosphate. In terms of biological role, involved in mRNA degradation. Catalyzes the phosphorolysis of single-stranded polyribonucleotides processively in the 3'- to 5'-direction. This is Polyribonucleotide nucleotidyltransferase from Chloroflexus aggregans (strain MD-66 / DSM 9485).